Here is a 132-residue protein sequence, read N- to C-terminus: Cell division protein FtsL (132 aa).

At 1 to 50 the chain is on the cytoplasmic side; the sequence is MAELKKMRHNHYDVPVMDEPVIASQIKKTNQKKESFQLPQKKLNKISVFE. Residues 51–71 form a helical membrane-spanning segment; the sequence is KILCILLLCSIVGIVVITIQI. Residues 72–132 are Extracellular-facing; sequence RTTISETMNN…EIDGNLRKVK (61 aa).

The protein belongs to the FtsL family.

The protein resides in the cell membrane. Its function is as follows. Essential cell division protein. This is Cell division protein FtsL from Melissococcus plutonius (strain ATCC 35311 / DSM 29964 / CIP 104052 / LMG 20360 / NCIMB 702443).